The primary structure comprises 167 residues: Disulfide bond formation protein B (167 aa).

At 1-12 (MFLNLLDAPRRL) the chain is on the cytoplasmic side. A helical transmembrane segment spans residues 13–29 (LALVALGCVALLAFGLY). The Periplasmic portion of the chain corresponds to 30 to 47 (LQHVVGLEPCPMCIVQRY). Cysteine 39 and cysteine 42 are disulfide-bonded. The helical transmembrane segment at 48–63 (ALVLVAIVAGLTAITS) threads the bilayer. Residues 64-69 (NKKGLI) lie on the Cytoplasmic side of the membrane. Residues 70–87 (TGSGVLLLLAGFGAFVAA) traverse the membrane as a helical segment. The Periplasmic portion of the chain corresponds to 88-143 (RQSFLQWYPPEVASCGRDFYGMIETFPLQRAIPMIFKGSGDCAKVDWTFLGGSIAN). Cysteine 102 and cysteine 129 are joined by a disulfide. The chain crosses the membrane as a helical span at residues 144-162 (WSFVCFAVIGLTALTLIAR). Topologically, residues 163-167 (LARQR) are cytoplasmic.

The protein belongs to the DsbB family.

It is found in the cell inner membrane. In terms of biological role, required for disulfide bond formation in some periplasmic proteins. Acts by oxidizing the DsbA protein. The chain is Disulfide bond formation protein B from Polaromonas naphthalenivorans (strain CJ2).